Reading from the N-terminus, the 218-residue chain is MAINIILLGPPGAGKGTQARRLIDERGLVQLSTGDMLREARSSGTEMGKRVAEVMDRGELVTDEIVIGLIREKLGQGGKGFIFDGFPRTLAQADALQALMAEMDQRIDAVIEMRVDDAALVSRISGRFTCGNCGEVYHDVTKPTKEPGKCDVCGSTDLRRRADDNEESLKTRLMEYYKKTSPLIGYYYVKGNLNPVDGLAEIDEVAAQVAKVMDKIPA.

12–17 (GAGKGT) is a binding site for ATP. Positions 32–61 (STGDMLREARSSGTEMGKRVAEVMDRGELV) are NMP. AMP is bound by residues Thr-33, Arg-38, 59-61 (ELV), 85-88 (GFPR), and Gln-92. An LID region spans residues 126 to 164 (GRFTCGNCGEVYHDVTKPTKEPGKCDVCGSTDLRRRADD). Arg-127 contributes to the ATP binding site. Residues Cys-130 and Cys-133 each contribute to the Zn(2+) site. ATP is bound at residue 136–137 (VY). Zn(2+) contacts are provided by Cys-150 and Cys-153. Residues Arg-161 and Arg-172 each coordinate AMP. Ala-200 serves as a coordination point for ATP.

It belongs to the adenylate kinase family. In terms of assembly, monomer.

The protein resides in the cytoplasm. The catalysed reaction is AMP + ATP = 2 ADP. It participates in purine metabolism; AMP biosynthesis via salvage pathway; AMP from ADP: step 1/1. In terms of biological role, catalyzes the reversible transfer of the terminal phosphate group between ATP and AMP. Plays an important role in cellular energy homeostasis and in adenine nucleotide metabolism. This chain is Adenylate kinase, found in Paracoccus denitrificans (strain Pd 1222).